We begin with the raw amino-acid sequence, 411 residues long: Efflux pump periplasmic linker BepF (411 aa).

Residues 118–196 (FVLQKDALQA…SLEQAQINLG (79 aa)) are a coiled coil.

The protein belongs to the membrane fusion protein (MFP) (TC 8.A.1) family. In terms of assembly, probably part of a tripartite efflux pump, which is composed of an outer membrane efflux protein, an inner membrane protein and a protein that expands the periplasmic space. Could form a tripartite pump with BepC and BepG.

Its subcellular location is the periplasm. Functionally, may contribute to resistance to some drugs, such as deoxycholate, sodium dodecyl sulfate and nalidixic acid, in the absence of BepD and BepE. The sequence is that of Efflux pump periplasmic linker BepF (bepF) from Brucella suis biovar 1 (strain 1330).